A 352-amino-acid chain; its full sequence is Photosystem II D2 protein (352 aa).

A helical membrane pass occupies residues 40 to 60; the sequence is CAYLAVGAWFTGTTFVTSWYT. Chlorophyll a is bound at residue His-117. A helical transmembrane segment spans residues 124–140; it reads GFTLRQFEIARLIGLRP. The pheophytin a site is built by Gln-129 and Asn-142. A helical transmembrane segment spans residues 152–165; that stretch reads VFVSVFLLYPLGQA. Residue His-197 coordinates chlorophyll a. The helical transmembrane segment at 207 to 227 threads the bilayer; the sequence is AALLCAIHGATVENTLFEDGD. His-214 and Phe-261 together coordinate a plastoquinone. Residue His-214 coordinates Fe cation. His-268 lines the Fe cation pocket. A helical transmembrane segment spans residues 278–294; sequence GLWMSAIGVVGLGVNLR.

This sequence belongs to the reaction center PufL/M/PsbA/D family. As to quaternary structure, PSII is composed of 1 copy each of membrane proteins PsbA, PsbB, PsbC, PsbD, PsbE, PsbF, PsbH, PsbI, PsbJ, PsbK, PsbL, PsbM, PsbT, PsbX, PsbY, PsbZ, Psb30/Ycf12, at least 3 peripheral proteins of the oxygen-evolving complex and a large number of cofactors. It forms dimeric complexes. The cofactor is The D1/D2 heterodimer binds P680, chlorophylls that are the primary electron donor of PSII, and subsequent electron acceptors. It shares a non-heme iron and each subunit binds pheophytin, quinone, additional chlorophylls, carotenoids and lipids. There is also a Cl(-1) ion associated with D1 and D2, which is required for oxygen evolution. The PSII complex binds additional chlorophylls, carotenoids and specific lipids..

It localises to the plastid. Its subcellular location is the cyanelle thylakoid membrane. It carries out the reaction 2 a plastoquinone + 4 hnu + 2 H2O = 2 a plastoquinol + O2. In terms of biological role, photosystem II (PSII) is a light-driven water:plastoquinone oxidoreductase that uses light energy to abstract electrons from H(2)O, generating O(2) and a proton gradient subsequently used for ATP formation. It consists of a core antenna complex that captures photons, and an electron transfer chain that converts photonic excitation into a charge separation. The D1/D2 (PsbA/PsbD) reaction center heterodimer binds P680, the primary electron donor of PSII as well as several subsequent electron acceptors. D2 is needed for assembly of a stable PSII complex. The chain is Photosystem II D2 protein from Cyanophora paradoxa.